The primary structure comprises 201 residues: Probable GTP-binding protein EngB (201 aa).

One can recognise an EngB-type G domain in the interval 21–191 (AAPQIILAGR…WNLLDVTAIP (171 aa)). Residues 29-36 (GRSNVGKS), 56-60 (GKTRS), 75-78 (DLPG), 142-145 (TKSD), and 168-172 (ICVSS) each bind GTP. Mg(2+) is bound by residues Ser36 and Thr58.

This sequence belongs to the TRAFAC class TrmE-Era-EngA-EngB-Septin-like GTPase superfamily. EngB GTPase family. It depends on Mg(2+) as a cofactor.

In terms of biological role, necessary for normal cell division and for the maintenance of normal septation. This is Probable GTP-binding protein EngB from Maridesulfovibrio salexigens (strain ATCC 14822 / DSM 2638 / NCIMB 8403 / VKM B-1763) (Desulfovibrio salexigens).